The following is a 326-amino-acid chain: tRNA N6-adenosine threonylcarbamoyltransferase (326 aa).

Fe cation contacts are provided by His111 and His115. Residues 134–138 (TVSGG), Asp167, Gly180, Asp184, and Asn268 each bind substrate. Asp293 is a binding site for Fe cation.

This sequence belongs to the KAE1 / TsaD family. The cofactor is Fe(2+).

It localises to the cytoplasm. It carries out the reaction L-threonylcarbamoyladenylate + adenosine(37) in tRNA = N(6)-L-threonylcarbamoyladenosine(37) in tRNA + AMP + H(+). Its function is as follows. Required for the formation of a threonylcarbamoyl group on adenosine at position 37 (t(6)A37) in tRNAs that read codons beginning with adenine. Is involved in the transfer of the threonylcarbamoyl moiety of threonylcarbamoyl-AMP (TC-AMP) to the N6 group of A37, together with TsaE and TsaB. TsaD likely plays a direct catalytic role in this reaction. This Dehalococcoides mccartyi (strain ATCC BAA-2100 / JCM 16839 / KCTC 5957 / BAV1) protein is tRNA N6-adenosine threonylcarbamoyltransferase.